Here is a 95-residue protein sequence, read N- to C-terminus: Integration host factor subunit beta (95 aa).

Belongs to the bacterial histone-like protein family. Heterodimer of an alpha and a beta chain.

Its function is as follows. This protein is one of the two subunits of integration host factor, a specific DNA-binding protein that functions in genetic recombination as well as in transcriptional and translational control. This is Integration host factor subunit beta from Shewanella sp. (strain ANA-3).